The following is a 387-amino-acid chain: Patatin-08 (387 aa).

The N-terminal stretch at 1–23 is a signal peptide; the sequence is MATTKSFLILIVMILATTSSTFA. One can recognise a PNPLA domain in the interval 32–230; sequence LSIDGGGIKG…TVADPALLSI (199 aa). A GXGXXG motif is present at residues 36 to 41; the sequence is GGGIKG. A GXSXG motif is present at residues 75–79; it reads GTSTG. Ser77 acts as the Nucleophile in catalysis. Asn115 carries an N-linked (GlcNAc...) asparagine glycan. Asp216 acts as the Proton acceptor in catalysis. The short motif at 216–218 is the DGA/G element; it reads DGA. The stretch at 361 to 385 forms a coiled coil; that stretch reads ETYEEALKRFAKLLSDRKKLRANKA.

The protein belongs to the patatin family. In terms of tissue distribution, tuber.

The protein resides in the vacuole. In terms of biological role, probable lipolytic acyl hydrolase (LAH), an activity which is thought to be involved in the response of tubers to pathogens. In Solanum tuberosum (Potato), this protein is Patatin-08.